The chain runs to 598 residues: Elongation factor 4 (598 aa).

Positions 4–185 (KNIRNFSIIA…TIIAKIPPPK (182 aa)) constitute a tr-type G domain. GTP-binding positions include 16 to 21 (DHGKST) and 132 to 135 (NKID).

Belongs to the TRAFAC class translation factor GTPase superfamily. Classic translation factor GTPase family. LepA subfamily.

It localises to the cell membrane. The enzyme catalyses GTP + H2O = GDP + phosphate + H(+). Its function is as follows. Required for accurate and efficient protein synthesis under certain stress conditions. May act as a fidelity factor of the translation reaction, by catalyzing a one-codon backward translocation of tRNAs on improperly translocated ribosomes. Back-translocation proceeds from a post-translocation (POST) complex to a pre-translocation (PRE) complex, thus giving elongation factor G a second chance to translocate the tRNAs correctly. Binds to ribosomes in a GTP-dependent manner. In Mycoplasma genitalium (strain ATCC 33530 / DSM 19775 / NCTC 10195 / G37) (Mycoplasmoides genitalium), this protein is Elongation factor 4.